Reading from the N-terminus, the 431-residue chain is 3-phosphoshikimate 1-carboxyvinyltransferase (431 aa).

3-phosphoshikimate contacts are provided by K21, S22, and R26. A phosphoenolpyruvate-binding site is contributed by K21. Residues G93 and R121 each coordinate phosphoenolpyruvate. Positions 166, 168, 318, and 345 each coordinate 3-phosphoshikimate. Phosphoenolpyruvate is bound at residue Q168. D318 functions as the Proton acceptor in the catalytic mechanism. Residues R349 and R391 each coordinate phosphoenolpyruvate.

The protein belongs to the EPSP synthase family. As to quaternary structure, monomer.

Its subcellular location is the cytoplasm. The catalysed reaction is 3-phosphoshikimate + phosphoenolpyruvate = 5-O-(1-carboxyvinyl)-3-phosphoshikimate + phosphate. Its pathway is metabolic intermediate biosynthesis; chorismate biosynthesis; chorismate from D-erythrose 4-phosphate and phosphoenolpyruvate: step 6/7. Its function is as follows. Catalyzes the transfer of the enolpyruvyl moiety of phosphoenolpyruvate (PEP) to the 5-hydroxyl of shikimate-3-phosphate (S3P) to produce enolpyruvyl shikimate-3-phosphate and inorganic phosphate. This chain is 3-phosphoshikimate 1-carboxyvinyltransferase, found in Sulfurihydrogenibium sp. (strain YO3AOP1).